A 192-amino-acid polypeptide reads, in one-letter code: Fe/S biogenesis protein NfuA (192 aa).

[4Fe-4S] cluster contacts are provided by Cys-149 and Cys-152.

The protein belongs to the NfuA family. Homodimer. It depends on [4Fe-4S] cluster as a cofactor.

Involved in iron-sulfur cluster biogenesis. Binds a 4Fe-4S cluster, can transfer this cluster to apoproteins, and thereby intervenes in the maturation of Fe/S proteins. Could also act as a scaffold/chaperone for damaged Fe/S proteins. The sequence is that of Fe/S biogenesis protein NfuA from Shewanella halifaxensis (strain HAW-EB4).